A 478-amino-acid polypeptide reads, in one-letter code: 3-isopropylmalate dehydratase large subunit (478 aa).

[4Fe-4S] cluster contacts are provided by C357, C418, and C421.

It belongs to the aconitase/IPM isomerase family. LeuC type 1 subfamily. Heterodimer of LeuC and LeuD. [4Fe-4S] cluster is required as a cofactor.

The enzyme catalyses (2R,3S)-3-isopropylmalate = (2S)-2-isopropylmalate. The protein operates within amino-acid biosynthesis; L-leucine biosynthesis; L-leucine from 3-methyl-2-oxobutanoate: step 2/4. Functionally, catalyzes the isomerization between 2-isopropylmalate and 3-isopropylmalate, via the formation of 2-isopropylmaleate. The protein is 3-isopropylmalate dehydratase large subunit of Novosphingobium aromaticivorans (strain ATCC 700278 / DSM 12444 / CCUG 56034 / CIP 105152 / NBRC 16084 / F199).